A 347-amino-acid polypeptide reads, in one-letter code: NADH-ubiquinone oxidoreductase chain 2 (347 aa).

10 helical membrane-spanning segments follow: residues 1–21 (MNPSIFIILLTTLILGTMMVI), 25–45 (HWLLAWIGFEMNMMAFIPIMM), 59–79 (YLLTQATASALLMMAVIINLM), 96–116 (TLMTVALAIKLGLAPFHFWVP), 122–142 (IPLTTGLILLTWQKLAPLSIL), 149–169 (INLYLMLTMSLLSILVGGWGG), 200–220 (LTLLNLLIYITMTFTMFMLFI), 239–259 (IITTLTMLTLLSMGGLPPLSG), 274–294 (DILIMPTFMAITALLNLYFYM), and 325–345 (LLPTAIVISTMLLPLTPMLSI).

It belongs to the complex I subunit 2 family. As to quaternary structure, core subunit of respiratory chain NADH dehydrogenase (Complex I) which is composed of 45 different subunits. Interacts with TMEM242.

Its subcellular location is the mitochondrion inner membrane. It catalyses the reaction a ubiquinone + NADH + 5 H(+)(in) = a ubiquinol + NAD(+) + 4 H(+)(out). Functionally, core subunit of the mitochondrial membrane respiratory chain NADH dehydrogenase (Complex I) which catalyzes electron transfer from NADH through the respiratory chain, using ubiquinone as an electron acceptor. Essential for the catalytic activity and assembly of complex I. The polypeptide is NADH-ubiquinone oxidoreductase chain 2 (Balaenoptera musculus (Blue whale)).